The primary structure comprises 351 residues: CCN family member 3 (351 aa).

A signal peptide spans 1–24 (METGGGQGLPVLLLLLLLLRPCEV). In terms of domain architecture, IGFBP N-terminal spans 27-101 (REAACPRPCG…GGGAGICMVL (75 aa)). Cystine bridges form between Cys31–Cys57, Cys35–Cys59, Cys39–Cys60, Cys46–Cys63, Cys71–Cys85, and Cys77–Cys98. Residues 104-170 (DNCVFDGMIY…GECCEKWVCD (67 aa)) form the VWFC domain. Residues 201 to 246 (NCIEQTTEWSACSKSCGMGFSTRVTNRNQQCEMVKQTRLCMMRPCE) form the TSP type-1 domain. 5 disulfides stabilise this stretch: Cys258–Cys295, Cys275–Cys309, Cys286–Cys325, Cys289–Cys327, and Cys294–Cys331. The CTCK domain occupies 258–332 (CIQTKKSMKA…NTCVCHGNCP (75 aa)). Residue Asn274 is glycosylated (N-linked (GlcNAc...) asparagine).

The protein belongs to the CCN family. Brain and heart, and at a lower level in muscle and intestine, in the embryo. Lung and less so in brain and spleen, in adult chicken.

It is found in the secreted. The protein localises to the cytoplasm. Its subcellular location is the cell junction. The protein resides in the gap junction. Functionally, immediate-early protein likely to play a role in cell growth regulation. Its overexpression is associated with tumorigenesis and expression of a N-terminal-truncated version of CCN3 gene in chicken embryonic fibroblasts (CEF) is sufficient to induce the transformation of CEF in vitro. This Gallus gallus (Chicken) protein is CCN family member 3 (CCN3).